The sequence spans 276 residues: Large ribosomal subunit protein uL2c (276 aa).

Disordered stretches follow at residues 1–51 (MAIR…GIIT) and 224–276 (VVMN…RRRK). 2 stretches are compositionally biased toward polar residues: residues 7 to 18 (RTYTPSTRNRPI) and 27 to 37 (SNPQKKLTSGQ).

Belongs to the universal ribosomal protein uL2 family. Part of the 50S ribosomal subunit.

It is found in the plastid. The protein resides in the chloroplast. The chain is Large ribosomal subunit protein uL2c (rpl2) from Cycas taitungensis (Prince sago).